A 1394-amino-acid polypeptide reads, in one-letter code: Kinesin-like protein KIF27 (1394 aa).

The Kinesin motor domain occupies Pro5–Ile341. Gly84–Thr91 serves as a coordination point for ATP. Coiled coils occupy residues Gln352 to Ala418 and Gln498 to Lys554. 2 disordered regions span residues Val559–Thr582 and Phe642–Ser665. The segment covering Pro571 to Pro580 has biased composition (basic and acidic residues). A phosphoserine mark is found at Ser643, Ser646, Ser672, Ser675, and Ser704. Coiled coils occupy residues Leu709 to Glu891, Leu921 to Ser1078, Asn1118 to Glu1152, and Asp1186 to Asp1226. Residues Lys886 to Asp916 are disordered. Residue Ser999 is modified to Phosphoserine. Residues Thr1267 to Asp1280 are compositionally biased toward basic and acidic residues. 2 disordered regions span residues Thr1267–Ile1319 and Ala1325–Ser1344. 2 stretches are compositionally biased toward polar residues: residues Asn1281 to Ile1295 and Ile1309 to Ile1319. 2 positions are modified to phosphoserine: Ser1365 and Ser1387.

Belongs to the TRAFAC class myosin-kinesin ATPase superfamily. Kinesin family. KIF27 subfamily. In terms of assembly, interacts with STK36.

The protein resides in the cytoplasm. It is found in the cytoskeleton. The protein localises to the cell projection. It localises to the cilium. In terms of biological role, plays an essential role in motile ciliogenesis. This chain is Kinesin-like protein KIF27 (Kif27), found in Mus musculus (Mouse).